The sequence spans 475 residues: UDP-N-acetylmuramate--L-alanine ligase (475 aa).

114–120 (GTHGKTT) is a binding site for ATP.

Belongs to the MurCDEF family.

The protein localises to the cytoplasm. The catalysed reaction is UDP-N-acetyl-alpha-D-muramate + L-alanine + ATP = UDP-N-acetyl-alpha-D-muramoyl-L-alanine + ADP + phosphate + H(+). It functions in the pathway cell wall biogenesis; peptidoglycan biosynthesis. Cell wall formation. The sequence is that of UDP-N-acetylmuramate--L-alanine ligase from Bartonella tribocorum (strain CIP 105476 / IBS 506).